The primary structure comprises 463 residues: Glycine--tRNA ligase (463 aa).

Positions 98 and 174 each coordinate substrate. ATP is bound by residues 206 to 208 (RNE), 216 to 221 (FRTREF), 290 to 291 (EL), and 334 to 337 (GADR). 221 to 225 (FEQME) lines the substrate pocket. 330–334 (EPSLG) lines the substrate pocket.

Belongs to the class-II aminoacyl-tRNA synthetase family. Homodimer.

The protein resides in the cytoplasm. It carries out the reaction tRNA(Gly) + glycine + ATP = glycyl-tRNA(Gly) + AMP + diphosphate. In terms of biological role, catalyzes the attachment of glycine to tRNA(Gly). The polypeptide is Glycine--tRNA ligase (Staphylococcus saprophyticus subsp. saprophyticus (strain ATCC 15305 / DSM 20229 / NCIMB 8711 / NCTC 7292 / S-41)).